The sequence spans 216 residues: Octanoyltransferase (216 aa).

The region spanning A33–A212 is the BPL/LPL catalytic domain. Residues R72 to H79, S139 to G141, and G152 to A154 each bind substrate. Catalysis depends on C170, which acts as the Acyl-thioester intermediate.

This sequence belongs to the LipB family.

The protein localises to the cytoplasm. It carries out the reaction octanoyl-[ACP] + L-lysyl-[protein] = N(6)-octanoyl-L-lysyl-[protein] + holo-[ACP] + H(+). It participates in protein modification; protein lipoylation via endogenous pathway; protein N(6)-(lipoyl)lysine from octanoyl-[acyl-carrier-protein]: step 1/2. Catalyzes the transfer of endogenously produced octanoic acid from octanoyl-acyl-carrier-protein onto the lipoyl domains of lipoate-dependent enzymes. Lipoyl-ACP can also act as a substrate although octanoyl-ACP is likely to be the physiological substrate. The sequence is that of Octanoyltransferase from Saccharophagus degradans (strain 2-40 / ATCC 43961 / DSM 17024).